The sequence spans 490 residues: UDP-N-acetylmuramoyl-L-alanyl-D-glutamate--2,6-diaminopimelate ligase (490 aa).

Ser-31 lines the UDP-N-acetyl-alpha-D-muramoyl-L-alanyl-D-glutamate pocket. 109–115 (GTNGKTS) contributes to the ATP binding site. UDP-N-acetyl-alpha-D-muramoyl-L-alanyl-D-glutamate-binding positions include Asn-150, 151-152 (TT), Ser-178, and Arg-186. Position 218 is an N6-carboxylysine (Lys-218). Residues Arg-384, 408 to 411 (DNPR), Gly-458, and Glu-462 contribute to the meso-2,6-diaminopimelate site. Residues 408–411 (DNPR) carry the Meso-diaminopimelate recognition motif motif.

The protein belongs to the MurCDEF family. MurE subfamily. Mg(2+) is required as a cofactor. Post-translationally, carboxylation is probably crucial for Mg(2+) binding and, consequently, for the gamma-phosphate positioning of ATP.

It is found in the cytoplasm. The enzyme catalyses UDP-N-acetyl-alpha-D-muramoyl-L-alanyl-D-glutamate + meso-2,6-diaminopimelate + ATP = UDP-N-acetyl-alpha-D-muramoyl-L-alanyl-gamma-D-glutamyl-meso-2,6-diaminopimelate + ADP + phosphate + H(+). It participates in cell wall biogenesis; peptidoglycan biosynthesis. Catalyzes the addition of meso-diaminopimelic acid to the nucleotide precursor UDP-N-acetylmuramoyl-L-alanyl-D-glutamate (UMAG) in the biosynthesis of bacterial cell-wall peptidoglycan. This Bacillus velezensis (strain DSM 23117 / BGSC 10A6 / LMG 26770 / FZB42) (Bacillus amyloliquefaciens subsp. plantarum) protein is UDP-N-acetylmuramoyl-L-alanyl-D-glutamate--2,6-diaminopimelate ligase.